Consider the following 440-residue polypeptide: MVIFSRSFLALSTTLIILALCINSSTMAQETEDLNSHSSSNSSTANKLPNDDGAWNEHAVKNPEEVAAMVDMKIKNSTERRRLGFFSCATGNPIDDCWRCDRNWHLRRKRLANCAIGFGRNAIGGRDGRYYVVTDPSDHDAVNPRPGTLRHAVIQDRPLWIVFKRDMVITLTQELIMNSFKTIDGRGVNVAIAGGACITIQYVTNIIIHGINVHDCRRTGNAMVRSSPSHYGWRTMADGDAISIFGSSHIWIDHNSLSNCADGLIDAIMGSTAITISNNYMTHHNEVMLMGHSDSYTRDKLMQVTIAYNHFGEGLIQRMPRCRHGYFHVVNNDYTHWVMYAIGGSANPTINSQGNRFLAPGNPFAKEVTKRVGSWQGEWKQWNWRSQGDLMLNGAYFTKSGAAAPASYARASSLGAKPASVVSMLTYSSGALKCRIGMRC.

An N-terminal signal peptide occupies residues 1–28 (MVIFSRSFLALSTTLIILALCINSSTMA). The segment at 32–56 (EDLNSHSSSNSSTANKLPNDDGAWN) is disordered. Asparagine 41 and asparagine 76 each carry an N-linked (GlcNAc...) asparagine glycan. Ca(2+) is bound by residues aspartate 238, aspartate 262, and aspartate 266. Arginine 318 is a catalytic residue.

Belongs to the polysaccharide lyase 1 family. Requires Ca(2+) as cofactor.

The enzyme catalyses Eliminative cleavage of (1-&gt;4)-alpha-D-galacturonan to give oligosaccharides with 4-deoxy-alpha-D-galact-4-enuronosyl groups at their non-reducing ends.. The protein operates within glycan metabolism; pectin degradation; 2-dehydro-3-deoxy-D-gluconate from pectin: step 2/5. The chain is Probable pectate lyase 10 from Arabidopsis thaliana (Mouse-ear cress).